Here is a 171-residue protein sequence, read N- to C-terminus: NADH-quinone oxidoreductase subunit C (171 aa).

The protein belongs to the complex I 30 kDa subunit family. NDH-1 is composed of 14 different subunits. Subunits NuoB, C, D, E, F, and G constitute the peripheral sector of the complex.

The protein resides in the cell membrane. The enzyme catalyses a quinone + NADH + 5 H(+)(in) = a quinol + NAD(+) + 4 H(+)(out). In terms of biological role, NDH-1 shuttles electrons from NADH, via FMN and iron-sulfur (Fe-S) centers, to quinones in the respiratory chain. The immediate electron acceptor for the enzyme in this species is believed to be ubiquinone. Couples the redox reaction to proton translocation (for every two electrons transferred, four hydrogen ions are translocated across the cytoplasmic membrane), and thus conserves the redox energy in a proton gradient. In Herpetosiphon aurantiacus (strain ATCC 23779 / DSM 785 / 114-95), this protein is NADH-quinone oxidoreductase subunit C.